An 865-amino-acid polypeptide reads, in one-letter code: Leucine--tRNA ligase (865 aa).

A 'HIGH' region motif is present at residues 58–68 (PYPSGNLHMGH). The short motif at 629-633 (KMSKS) is the 'KMSKS' region element. Residue K632 participates in ATP binding.

It belongs to the class-I aminoacyl-tRNA synthetase family.

It is found in the cytoplasm. The catalysed reaction is tRNA(Leu) + L-leucine + ATP = L-leucyl-tRNA(Leu) + AMP + diphosphate. This chain is Leucine--tRNA ligase, found in Synechococcus elongatus (strain ATCC 33912 / PCC 7942 / FACHB-805) (Anacystis nidulans R2).